The following is a 269-amino-acid chain: Tryptophan synthase alpha chain (269 aa).

Residues Glu-49 and Asp-60 each act as proton acceptor in the active site.

This sequence belongs to the TrpA family. In terms of assembly, tetramer of two alpha and two beta chains.

It carries out the reaction (1S,2R)-1-C-(indol-3-yl)glycerol 3-phosphate + L-serine = D-glyceraldehyde 3-phosphate + L-tryptophan + H2O. The protein operates within amino-acid biosynthesis; L-tryptophan biosynthesis; L-tryptophan from chorismate: step 5/5. Functionally, the alpha subunit is responsible for the aldol cleavage of indoleglycerol phosphate to indole and glyceraldehyde 3-phosphate. The protein is Tryptophan synthase alpha chain of Pseudomonas entomophila (strain L48).